Consider the following 331-residue polypeptide: Putative mitochondrial 2-oxoglutarate/malate carrier protein (331 aa).

Solcar repeat units follow at residues 39-128, 140-231, and 239-329; these read VRAA…FMSR, VGFK…AKAQ, and SSKV…LGWL. A run of 6 helical transmembrane segments spans residues 42–62, 103–121, 148–168, 199–219, 245–265, and 309–329; these read ALPFINGGLSGMVATTVIQPI, GLSAGLLRQAVYTTARIGC, AGLAAGGLAAMIGNPADLALI, GVAALWAGAAPTVVRAMALNF, LSASAIAGFFASFFSLPFDFV, and YVRIAPHAMVTLLVADYLGWL.

Belongs to the mitochondrial carrier (TC 2.A.29) family.

Its subcellular location is the mitochondrion inner membrane. In terms of biological role, catalyzes the transport of 2-oxoglutarate across the inner mitochondrial membrane. This chain is Putative mitochondrial 2-oxoglutarate/malate carrier protein (mic-33), found in Neurospora crassa (strain ATCC 24698 / 74-OR23-1A / CBS 708.71 / DSM 1257 / FGSC 987).